The primary structure comprises 179 residues: ATP-dependent protease subunit HslV (179 aa).

Thr8 is a catalytic residue. Na(+) contacts are provided by Ser164, Cys167, and Thr170.

Belongs to the peptidase T1B family. HslV subfamily. As to quaternary structure, a double ring-shaped homohexamer of HslV is capped on each side by a ring-shaped HslU homohexamer. The assembly of the HslU/HslV complex is dependent on binding of ATP.

The protein resides in the cytoplasm. The catalysed reaction is ATP-dependent cleavage of peptide bonds with broad specificity.. With respect to regulation, allosterically activated by HslU binding. Its function is as follows. Protease subunit of a proteasome-like degradation complex believed to be a general protein degrading machinery. This Staphylococcus carnosus (strain TM300) protein is ATP-dependent protease subunit HslV.